The primary structure comprises 298 residues: MNKAYMYMNKLRAYFIYSKPQVWWLLVFIGLIGSILAINSFKSYLIILLLVALVANMTGSMGAEGLTNYIDRDMDSIMERTRNRPLPSGEISEKGAFLFGIILSLFSIFILLIFKRYLAALFMFLGLFDNVFIYSYLLKRRTPYSIILGGFSGAFPVLIGWYTVTDRFSWIPFILFFLVMFWIPVHVWSLAYKYRDDYYRAGVPMLPVVYSDRKTAVSISLSSMLLILFSVIPYFLGFFNYLYLLVILILSVPIVIYSVNFIKKPTKKASMRLFIYTAPYLTFVFFIVMIIHIIEIIK.

The next 9 helical transmembrane spans lie at 21 to 41, 43 to 63, 94 to 114, 118 to 138, 144 to 164, 168 to 188, 215 to 235, 236 to 256, and 274 to 294; these read QVWW…INSF, SYLI…SMGA, KGAF…LLIF, LAAL…SYLL, YSII…WYTV, FSWI…VHVW, TAVS…IPYF, LGFF…PIVI, and FIYT…IHII.

It belongs to the UbiA prenyltransferase family. Protoheme IX farnesyltransferase subfamily.

It is found in the cell membrane. The enzyme catalyses heme b + (2E,6E)-farnesyl diphosphate + H2O = Fe(II)-heme o + diphosphate. It participates in porphyrin-containing compound metabolism; heme O biosynthesis; heme O from protoheme: step 1/1. Its function is as follows. Converts heme B (protoheme IX) to heme O by substitution of the vinyl group on carbon 2 of heme B porphyrin ring with a hydroxyethyl farnesyl side group. The polypeptide is Protoheme IX farnesyltransferase 1 (Picrophilus torridus (strain ATCC 700027 / DSM 9790 / JCM 10055 / NBRC 100828 / KAW 2/3)).